The following is a 644-amino-acid chain: Macrolide export ATP-binding/permease protein MacB (644 aa).

One can recognise an ABC transporter domain in the interval 4–242; the sequence is IECKNINRYF…SNVGRIREKA (239 aa). 40-47 contacts ATP; it reads GQSGSGKS. 4 helical membrane-spanning segments follow: residues 270–290, 524–544, 574–594, and 607–627; these read LLTMLGIIIGIASVVSVVALG, IALISLVVGGIGVMNIMLVSV, LICVIGGLVGVGLSAAVSLVF, and AMSVIGAVACSTGIGIAFGFM.

The protein belongs to the ABC transporter superfamily. Macrolide exporter (TC 3.A.1.122) family. In terms of assembly, homodimer.

The protein resides in the cell inner membrane. Functionally, non-canonical ABC transporter that contains transmembrane domains (TMD), which form a pore in the inner membrane, and an ATP-binding domain (NBD), which is responsible for energy generation. Confers resistance against macrolides. The chain is Macrolide export ATP-binding/permease protein MacB from Neisseria meningitidis serogroup B (strain ATCC BAA-335 / MC58).